Reading from the N-terminus, the 559-residue chain is NXPE family member 3 (559 aa).

An N-terminal signal peptide occupies residues 1–30 (MWTNFFKLRLFCCLLAVLMVVVLVINVTQV). Asn-237, Asn-292, and Asn-346 each carry an N-linked (GlcNAc...) asparagine glycan.

The protein belongs to the NXPE family.

Its subcellular location is the secreted. In Homo sapiens (Human), this protein is NXPE family member 3 (NXPE3).